The primary structure comprises 287 residues: GTPase Era (287 aa).

Residues 11–174 form the Era-type G domain; sequence RSGFVAVIGR…RSYLASSLPE (164 aa). Residues 19–26 and 66–70 each bind GTP; these read GRTNVGKS and DTPGI. A KH type-2 domain is found at 205–273; that stretch reads LRDELPQALA…PLTLRVKVQR (69 aa).

This sequence belongs to the TRAFAC class TrmE-Era-EngA-EngB-Septin-like GTPase superfamily. Era GTPase family. In terms of assembly, monomer.

The protein localises to the cytoplasm. It localises to the cell membrane. Functionally, an essential GTPase that binds both GDP and GTP, with rapid nucleotide exchange. Plays a role in 16S rRNA processing and 30S ribosomal subunit biogenesis and possibly also in cell cycle regulation and energy metabolism. This is GTPase Era from Acidimicrobium ferrooxidans (strain DSM 10331 / JCM 15462 / NBRC 103882 / ICP).